The chain runs to 138 residues: Cellular retinoic acid-binding protein 2 (138 aa).

The Nuclear localization signal signature appears at 21-31 (KALGVNMMMRK). K102 is covalently cross-linked (Glycyl lysine isopeptide (Lys-Gly) (interchain with G-Cter in SUMO)). All-trans-retinoate is bound at residue 133 to 135 (RVY).

It belongs to the calycin superfamily. Fatty-acid binding protein (FABP) family. Interacts with importin alpha. Interacts with RXR and RARA. In terms of processing, sumoylated in response to retinoic acid binding, sumoylation is critical for dissociation from ER and subsequent nuclear translocation. In terms of tissue distribution, embryo and skin of adult mouse.

It is found in the cytoplasm. Its subcellular location is the endoplasmic reticulum. It localises to the nucleus. Transports retinoic acid to the nucleus. Regulates the access of retinoic acid to the nuclear retinoic acid receptors. In Mus musculus (Mouse), this protein is Cellular retinoic acid-binding protein 2 (Crabp2).